Here is a 450-residue protein sequence, read N- to C-terminus: Na(+)/H(+) antiporter NhaA 2 (450 aa).

12 helical membrane passes run 43–63, 86–106, 124–144, 155–175, 185–205, 208–228, 234–254, 258–278, 299–319, 326–346, 364–384, and 398–418; these read VGGAVLLVASAVALVWANSPW, LTLGTWAADGLLAVFFLVVGL, ALPMAAAVGGMVVPALIFVAV, GWAIPTATDIAFAVAVLAVIS, FLLTLAVVDDLLAVTVIAVFY, EINLTALGLSIVPLALFALCV, SWWLLLPLGVATWVLVHESGV, VAGVLLGFTVPVLRSVAAGGP, VAVPVFAFFAAGVAIGGVSGL, PITLGIILGLVVGKPVGIFLT, WIDVFGVALLAGIGFTVSLLI, and FVKVGVLTGSLVAALIAAVLL.

Belongs to the NhaA Na(+)/H(+) (TC 2.A.33) antiporter family.

Its subcellular location is the cell membrane. The enzyme catalyses Na(+)(in) + 2 H(+)(out) = Na(+)(out) + 2 H(+)(in). In terms of biological role, na(+)/H(+) antiporter that extrudes sodium in exchange for external protons. This is Na(+)/H(+) antiporter NhaA 2 from Mycobacterium sp. (strain JLS).